The chain runs to 316 residues: UDP-N-acetylenolpyruvoylglucosamine reductase (316 aa).

In terms of domain architecture, FAD-binding PCMH-type spans 27 to 225 (VGGKAERFYR…KTAINALLKK (199 aa)). Arg-190 is an active-site residue. Ser-239 (proton donor) is an active-site residue. Glu-309 is an active-site residue.

The protein belongs to the MurB family. FAD serves as cofactor.

It is found in the cytoplasm. It carries out the reaction UDP-N-acetyl-alpha-D-muramate + NADP(+) = UDP-N-acetyl-3-O-(1-carboxyvinyl)-alpha-D-glucosamine + NADPH + H(+). Its pathway is cell wall biogenesis; peptidoglycan biosynthesis. Its function is as follows. Cell wall formation. This is UDP-N-acetylenolpyruvoylglucosamine reductase from Coxiella burnetii (strain Dugway 5J108-111).